The sequence spans 189 residues: dCTP deaminase (189 aa).

DCTP is bound by residues 112-117, 136-138, Gln-157, Tyr-171, and Gln-181; these read KSTYAR and TLE. The Proton donor/acceptor role is filled by Glu-138.

The protein belongs to the dCTP deaminase family. Homotrimer.

The enzyme catalyses dCTP + H2O + H(+) = dUTP + NH4(+). It functions in the pathway pyrimidine metabolism; dUMP biosynthesis; dUMP from dCTP (dUTP route): step 1/2. Catalyzes the deamination of dCTP to dUTP. The polypeptide is dCTP deaminase (Burkholderia mallei (strain NCTC 10247)).